The following is a 197-amino-acid chain: Putative manganese efflux pump MntP (197 aa).

6 helical membrane-spanning segments follow: residues 8-28 (VILL…GLGA), 43-63 (VYAA…GYLL), 66-86 (VLLG…LIVL), 123-143 (LAIA…LLAL), 146-166 (WLAC…GIYL), and 177-197 (KAEI…MLFS).

This sequence belongs to the MntP (TC 9.B.29) family.

It localises to the cell inner membrane. Probably functions as a manganese efflux pump. In Psychrobacter arcticus (strain DSM 17307 / VKM B-2377 / 273-4), this protein is Putative manganese efflux pump MntP.